The sequence spans 155 residues: Ribosome maturation factor RimP (155 aa).

The protein belongs to the RimP family.

The protein localises to the cytoplasm. Required for maturation of 30S ribosomal subunits. The sequence is that of Ribosome maturation factor RimP from Staphylococcus epidermidis (strain ATCC 35984 / DSM 28319 / BCRC 17069 / CCUG 31568 / BM 3577 / RP62A).